The following is a 422-amino-acid chain: Glutamate 2,3-aminomutase (422 aa).

Residues R150 to P371 form the Radical SAM core domain. [4Fe-4S] cluster is bound by residues C164, C168, and C171. At K376 the chain carries N6-(pyridoxal phosphate)lysine.

The protein belongs to the radical SAM superfamily. It depends on pyridoxal 5'-phosphate as a cofactor. [4Fe-4S] cluster serves as cofactor.

The enzyme catalyses L-glutamate = 3-aminopentanedioate. Its function is as follows. Catalyzes the interconversion of L-glutamate and L-beta-glutamate. Does not have L-lysine 2,3-aminomutase activity. The protein is Glutamate 2,3-aminomutase (eam) of Clostridioides difficile (strain 630) (Peptoclostridium difficile).